Here is a 138-residue protein sequence, read N- to C-terminus: Transcription antitermination protein NusB (138 aa).

This sequence belongs to the NusB family.

In terms of biological role, involved in transcription antitermination. Required for transcription of ribosomal RNA (rRNA) genes. Binds specifically to the boxA antiterminator sequence of the ribosomal RNA (rrn) operons. The protein is Transcription antitermination protein NusB of Limosilactobacillus reuteri (strain DSM 20016) (Lactobacillus reuteri).